The following is a 361-amino-acid chain: Polygalacturonase (361 aa).

A signal peptide spans 1-18 (MISANSLLISTLCAFAIA). Cysteines 27 and 43 form a disulfide. 5 PbH1 repeats span residues 155 to 185 (CSDL…DVGS), 186 to 207 (SSNV…AVNS), 208 to 228 (GSTI…SVGS), 237 to 258 (VNGF…RIKT), and 266 to 288 (VTNV…VIEG). Residue aspartate 200 is the Proton donor of the active site. Cysteine 202 and cysteine 218 are joined by a disulfide. Histidine 222 is a catalytic residue. Residues asparagine 318 and asparagine 330 are each glycosylated (N-linked (GlcNAc...) asparagine). Cysteine 350 and cysteine 361 form a disulfide bridge.

This sequence belongs to the glycosyl hydrolase 28 family.

It catalyses the reaction (1,4-alpha-D-galacturonosyl)n+m + H2O = (1,4-alpha-D-galacturonosyl)n + (1,4-alpha-D-galacturonosyl)m.. In Saccharomyces cerevisiae (strain ATCC 204508 / S288c) (Baker's yeast), this protein is Polygalacturonase (PGU1).